The sequence spans 256 residues: Probable succinate transporter subunit YjjP (256 aa).

Residues 1–113 (MQTEQQRAVT…KRFSQIQPLR (113 aa)) are Cytoplasmic-facing. Residues 114–135 (YPRWLVALMVGLSCACFCKLNN) traverse the membrane as a helical segment. Topologically, residues 136–140 (GGWDG) are periplasmic. A helical transmembrane segment spans residues 141 to 158 (AVITFFASTTAMYIRQLL). Residues 159–168 (AQRHLHPQIN) are Cytoplasmic-facing. A helical membrane pass occupies residues 169 to 189 (FCLTAFAATTISGLLLQLPTF). The Periplasmic segment spans residues 190 to 194 (SNTPT). Residues 195–215 (IAMAASVLLLVPGFPLINAVA) form a helical membrane-spanning segment. Residues 216 to 228 (DMFKGHINTGLAR) are Cytoplasmic-facing. The chain crosses the membrane as a helical span at residues 229-249 (WAIASLLTLATCVGVVMALTI). Over 250 to 256 (WGLRGWV) the chain is Periplasmic.

It belongs to the ThrE exporter (TC 2.A.79) family. As to quaternary structure, the transporter is composed of YjjB and YjjP.

Its subcellular location is the cell inner membrane. Involved in succinate export with YjjB. Both proteins are required for export. Contributes to succinate production under both aerobic and anaerobic conditions. The protein is Probable succinate transporter subunit YjjP (yjjP) of Escherichia coli (strain K12).